A 393-amino-acid chain; its full sequence is S-adenosylmethionine synthase (393 aa).

Residue His17 coordinates ATP. Asp19 serves as a coordination point for Mg(2+). Residue Glu45 coordinates K(+). L-methionine contacts are provided by Glu58 and Gln106. The interval 106-116 (QSAHIAQGVDA) is flexible loop. ATP is bound by residues 171 to 173 (DAK), 237 to 238 (KF), Asp246, 252 to 253 (RK), Ala269, and Lys273. Asp246 contributes to the L-methionine binding site. Lys277 is a binding site for L-methionine.

The protein belongs to the AdoMet synthase family. As to quaternary structure, homotetramer; dimer of dimers. Mg(2+) is required as a cofactor. Requires K(+) as cofactor.

Its subcellular location is the cytoplasm. It carries out the reaction L-methionine + ATP + H2O = S-adenosyl-L-methionine + phosphate + diphosphate. The protein operates within amino-acid biosynthesis; S-adenosyl-L-methionine biosynthesis; S-adenosyl-L-methionine from L-methionine: step 1/1. Its function is as follows. Catalyzes the formation of S-adenosylmethionine (AdoMet) from methionine and ATP. The overall synthetic reaction is composed of two sequential steps, AdoMet formation and the subsequent tripolyphosphate hydrolysis which occurs prior to release of AdoMet from the enzyme. This is S-adenosylmethionine synthase from Ruegeria sp. (strain TM1040) (Silicibacter sp.).